The primary structure comprises 1113 residues: Protein MGA2 (1113 aa).

Residues 91 to 114 (TPLEEEMESNRALKEEEEDEHENK) are disordered. A Phosphoserine modification is found at serine 255. Polar residues-rich tracts occupy residues 344–357 (DTTK…SSRR) and 437–452 (HIPS…SESF). 2 disordered regions span residues 344 to 376 (DTTK…NNQL) and 437 to 462 (HIPS…NDNP). Phosphoserine is present on serine 467. Residues 530 to 610 (PSINRVIPSQ…NENNNDDLPQ (81 aa)) enclose the IPT/TIG domain. A disordered region spans residues 658-687 (IVGNDSPDSGTNGNSCSKSTGPSPNQHSMN). Positions 663-687 (SPDSGTNGNSCSKSTGPSPNQHSMN) are enriched in polar residues. 2 ANK repeats span residues 719–748 (LGRT…RVND) and 752–781 (FGLT…NYSL). Residues 1037 to 1054 (MLIFFWIPLTLLLLTWFI) traverse the membrane as a helical segment.

It localises to the membrane. This is Protein MGA2 (MGA2) from Saccharomyces cerevisiae (strain ATCC 204508 / S288c) (Baker's yeast).